The primary structure comprises 262 residues: Adenosylcobinamide-GDP ribazoletransferase (262 aa).

6 consecutive transmembrane segments (helical) span residues Tyr43–Gln63, Leu66–Phe86, Gly120–Leu140, Ala146–Phe166, Leu191–Leu211, and Ala242–Leu262.

The protein belongs to the CobS family. Mg(2+) is required as a cofactor.

It is found in the cell inner membrane. The catalysed reaction is alpha-ribazole + adenosylcob(III)inamide-GDP = adenosylcob(III)alamin + GMP + H(+). It catalyses the reaction alpha-ribazole 5'-phosphate + adenosylcob(III)inamide-GDP = adenosylcob(III)alamin 5'-phosphate + GMP + H(+). It functions in the pathway cofactor biosynthesis; adenosylcobalamin biosynthesis; adenosylcobalamin from cob(II)yrinate a,c-diamide: step 7/7. Functionally, joins adenosylcobinamide-GDP and alpha-ribazole to generate adenosylcobalamin (Ado-cobalamin). Also synthesizes adenosylcobalamin 5'-phosphate from adenosylcobinamide-GDP and alpha-ribazole 5'-phosphate. The protein is Adenosylcobinamide-GDP ribazoletransferase of Shewanella baltica (strain OS195).